A 941-amino-acid chain; its full sequence is MSASKEGKEKKGKLLGVENISPPKDKRPATRMKLLNDVGAGEDSEASTTTTTSRTPSNKQEKRGSVAGSRIKILNEEILGTPKTEKRGATKSTAPAASTVKILNEKKTPSATVTAVETTKIKTSPSKRKKMEHYVLQAVKSENTKADTTVTVVTEEDDTIDFILADDEEVVPGRIENNNGQEIVVTEDDEDLGEDGDEDGEDSSGKGNSSQTKIKEIVEHVCGKCYKTFRRVQSLKKHLEFCRYDSGYHLRKADMLKNLEKIEKDAVVMEKKDICFCCSESYDTFHLGHINCPDCPKSFKTQTSYERHIFITHSEFSDFPCSICNANLRSEALLALHEEQHKSRGKPYACKICGKDFTRSYHLKRHQKYSSCSSNETDTMSCKVCDRVFYRLDNLRSHLKQHLGTQVVKKPEYMCHTCKNCFYSLSTLNIHIRTHTGEKPFDCDLCDKKFSALVALKKHRRYHTGEKPYSCTVCNQAFAVKEVLNRHMKRHTGERPHKCDECGKSFIQATQLRTHSKTHIRPFPCEQCDEKFKTEKQLERHVKTHSRTKRPVFSCAECKRNFRTPALLKEHMDEGKHSPKQQRSSMRSAVKIMERTDCAICDKNFDSSDTLRRHIRTVHECDPDDIFGVEPHPSKRAKKDIESEEVVPVALNTSAGSLISSQTDGNGVVVREFLVDEGDGAAQTITLENETYTILPLDGAIEGEQLTDEAGVKPEAKKEEAQVSPVVKKEQRKSLAASLAAAIADNLEESCSEDDFSGEILTEEDIKLKENVGKLIDMLVDPPILKKYGWPNAPEETVLCKVIENCGHDLTKGGENYAELDYGSRMREYCKLLFTVVIHNDSIKSLLNNFPIDDVIEYVLGDEDQDEGGLDKDNESHSGDEEAVSVTGETKTNEIREKPEKKEVSAKSEKKEIVGKAVDKDNSEEVVRENKKKPVGEQEKA.

2 disordered regions span residues 1 to 97 and 176 to 211; these read MSAS…APAA and ENNNGQEIVVTEDDEDLGEDGDEDGEDSSGKGNSSQ. Residues 47–57 show a composition bias toward low complexity; that stretch reads STTTTTSRTPS. Over residues 185–202 the composition is skewed to acidic residues; it reads VTEDDEDLGEDGDEDGED. Residue Thr-186 is modified to Phosphothreonine. A C2H2-type 1; atypical zinc finger spans residues 220-242; sequence HVCGKCYKTFRRVQSLKKHLEFC. The C2H2-type 2 zinc-finger motif lies at 290–313; sequence INCPDCPKSFKTQTSYERHIFITH. Residues 319–341 form a C2H2-type 3; atypical zinc finger; it reads FPCSICNANLRSEALLALHEEQH. C2H2-type zinc fingers lie at residues 348-366, 380-402, 413-435, 441-463, 469-491, 497-519, 523-545, 553-577, and 596-619; these read YACKICGKDFTRSYHLKRH, MSCKVCDRVFYRLDNLRSHLKQH, YMCHTCKNCFYSLSTLNIHIRTH, FDCDLCDKKFSALVALKKHRRYH, YSCTVCNQAFAVKEVLNRHMKRH, HKCDECGKSFIQATQLRTHSKTH, FPCEQCDEKFKTEKQLERHVKTH, FSCAECKRNFRTPALLKEHMDEGKH, and TDCAICDKNFDSSDTLRRHIRTVH. The interaction with mod(mdg4) stretch occupies residues 760–860; it reads ILTEEDIKLK…PIDDVIEYVL (101 aa). The interval 864-941 is disordered; it reads DQDEGGLDKD…KKPVGEQEKA (78 aa). Composition is skewed to basic and acidic residues over residues 869–880 and 891–941; these read GLDKDNESHSGD and KTNE…QEKA.

In terms of assembly, component of the gypsy chromatin insulator complex, composed of Cp190, mod(mdg4) and su(Hw). The gypsy chromatin insulator complex interacts with Topors via mod(mdg4) and su(Hw). Upon ecdysone stimulation, interacts with Nup98.

The protein localises to the nucleus. The protein resides in the chromosome. Functionally, component of the gypsy chromatin insulator complex which is required for the function of the gypsy chromatin insulator and other endogenous chromatin insulators. Chromatin insulators are regulatory elements which establish independent domains of transcriptional activity within eukaryotic genomes. Insulators have two defining properties; they can block the communication between an enhancer and a promoter when placed between them and can also buffer transgenes from position effect variegation (PEV). Insulators are proposed to structure the chromatin fiber into independent domains of differing transcriptional potential by promoting the formation of distinct chromatin loops. This chromatin looping may involve the formation of insulator bodies, where homotypic interactions between individual subunits of the insulator complex could promote the clustering of widely spaced insulators at the nuclear periphery. Within the gypsy insulator complex, this protein binds specifically to a region of the gypsy element located 3' of the 5' long terminal repeat (LTR), and may also mediate interaction with other endogenous insulators at sites distinct from those recognized by Cp190. Cooperates with pita and cliff to recruit Cp190 and regulate insulator function at the front-ultraabdominal (Fub) boundary. This Drosophila melanogaster (Fruit fly) protein is Zinc finger protein su(Hw).